The following is a 161-amino-acid chain: Protein shisa-like-2B (161 aa).

The chain crosses the membrane as a helical span at residues 65–85; the sequence is IGALIGLGIAALVLLAFVISV. The interval 115–134 is disordered; that stretch reads QEGNSNRKSKAPRSNAASNS.

This sequence belongs to the shisa family.

Its subcellular location is the membrane. The sequence is that of Protein shisa-like-2B (SHISAL2B) from Bos taurus (Bovine).